The chain runs to 606 residues: Flagellar WD repeat-containing protein Pf20 (606 aa).

Residues 229 to 250 (PLPGAERSLGGQSTAAAGGGAS) are disordered. 7 WD repeats span residues 324–354 (GHLLSVANLALHPTKPILVTASDDKTWKMWH), 366–396 (GHKDWVAGVDFHPAGTCLASGGGDSAVKIWD), 408–438 (DHKQAIWSVRFHHLGEVVASGSLDHTVRLWD), 450–480 (GHVDSVNDLAWQPFSSSLATASSDKTVSVWD), 492–522 (GHQNSCNGVSFNILGTQLASTDADGVVKLWD), 534–564 (TGKHPANKSCFDRSGQVLAVACDDGKVKAYS), and 576–606 (GHEDAVQAVLFDPAGQYLVSCGSDNTFRLWS).

Inter-microtubule bridges in flagella.

The protein localises to the cell projection. The protein resides in the cilium. Its subcellular location is the flagellum. The polypeptide is Flagellar WD repeat-containing protein Pf20 (PF20) (Chlamydomonas reinhardtii (Chlamydomonas smithii)).